Consider the following 548-residue polypeptide: Chaperonin GroEL (548 aa).

ATP-binding positions include 30–33 (TLGP), K51, 87–91 (DGTTT), G415, 479–481 (NAA), and D495. A disordered region spans residues 524 to 548 (LPKEDKSSDSNSSPAGGMGGMGGMM). Over residues 539-548 (GGMGGMGGMM) the composition is skewed to gly residues.

The protein belongs to the chaperonin (HSP60) family. As to quaternary structure, forms a cylinder of 14 subunits composed of two heptameric rings stacked back-to-back. Interacts with the co-chaperonin GroES.

Its subcellular location is the cytoplasm. The catalysed reaction is ATP + H2O + a folded polypeptide = ADP + phosphate + an unfolded polypeptide.. In terms of biological role, together with its co-chaperonin GroES, plays an essential role in assisting protein folding. The GroEL-GroES system forms a nano-cage that allows encapsulation of the non-native substrate proteins and provides a physical environment optimized to promote and accelerate protein folding. This is Chaperonin GroEL from Buchnera aphidicola subsp. Myzus persicae (Myzus persicae primary endosymbiont).